A 133-amino-acid chain; its full sequence is Small ribosomal subunit protein bS6 (133 aa).

The protein belongs to the bacterial ribosomal protein bS6 family.

Its function is as follows. Binds together with bS18 to 16S ribosomal RNA. The chain is Small ribosomal subunit protein bS6 from Chlorobium luteolum (strain DSM 273 / BCRC 81028 / 2530) (Pelodictyon luteolum).